The chain runs to 57 residues: Catalase-1 (57 aa).

Tyr-37 contacts heme.

In terms of assembly, homodimer. The cofactor is heme.

It catalyses the reaction 2 H2O2 = O2 + 2 H2O. Decomposes hydrogen peroxide into water and oxygen; serves to protect cells from the toxic effects of hydrogen peroxide. The protein is Catalase-1 of Comamonas terrigena.